The chain runs to 221 residues: Imidazoleglycerol-phosphate dehydratase (221 aa).

Belongs to the imidazoleglycerol-phosphate dehydratase family.

It carries out the reaction D-erythro-1-(imidazol-4-yl)glycerol 3-phosphate = 3-(imidazol-4-yl)-2-oxopropyl phosphate + H2O. It participates in amino-acid biosynthesis; L-histidine biosynthesis; L-histidine from 5-phospho-alpha-D-ribose 1-diphosphate: step 6/9. The sequence is that of Imidazoleglycerol-phosphate dehydratase (HIS3) from Kluyveromyces marxianus (Yeast).